Reading from the N-terminus, the 466-residue chain is Trigger factor (466 aa).

The region spanning 162 to 243 is the PPIase FKBP-type domain; that stretch reads GDVVSIDLSA…VRSVKERELP (82 aa). The segment at 428–466 is disordered; the sequence is GNTIDTSEFFGKRVSAGEAEEAEPADEGAARAASDEATT. The span at 457–466 shows a compositional bias: low complexity; the sequence is ARAASDEATT.

It belongs to the FKBP-type PPIase family. Tig subfamily.

It localises to the cytoplasm. The catalysed reaction is [protein]-peptidylproline (omega=180) = [protein]-peptidylproline (omega=0). Involved in protein export. Acts as a chaperone by maintaining the newly synthesized protein in an open conformation. Functions as a peptidyl-prolyl cis-trans isomerase. The chain is Trigger factor from Mycobacterium tuberculosis (strain ATCC 25177 / H37Ra).